We begin with the raw amino-acid sequence, 242 residues long: Venom nerve growth factor (242 aa).

Residues 1 to 18 (MSMMCYTLIIAFLIGIWA) form the signal peptide. The propeptide occupies 19-125 (APKSEDNVPL…TLNRNIRAKR (107 aa)). Basic and acidic residues predominate over residues 47–66 (GLKTSRNTDQRHPAPKKAED). Residues 47-70 (GLKTSRNTDQRHPAPKKAEDQELG) are disordered. 3 disulfide bridges follow: Cys-139-Cys-203, Cys-181-Cys-231, and Cys-191-Cys-233. A glycan (N-linked (GlcNAc...) asparagine) is linked at Asn-166.

This sequence belongs to the NGF-beta family. As to quaternary structure, homodimer; non-covalently linked. Expressed by the venom gland.

The protein resides in the secreted. Its function is as follows. Nerve growth factor is important for the development and maintenance of the sympathetic and sensory nervous systems. It stimulates division and differentiation of sympathetic and embryonic sensory neurons as well as basal forebrain cholinergic neurons in the brain. Its relevance in the snake venom is not clear. However, it has been shown to inhibit metalloproteinase-dependent proteolysis of platelet glycoprotein Ib alpha, suggesting a metalloproteinase inhibition to prevent metalloprotease autodigestion and/or protection against prey proteases. Binds a lipid between the two protein chains in the homodimer. The lipid-bound form promotes histamine relase from mouse mast cells, contrary to the lipid-free form. This chain is Venom nerve growth factor, found in Drysdalia coronoides (White-lipped snake).